A 391-amino-acid chain; its full sequence is L-tryptophan--pyruvate aminotransferase 1 (391 aa).

Residues Tyr-58, 100–101, Asn-168, 191–194, 214–217, and Arg-225 contribute to the pyridoxal 5'-phosphate site; these read ST, DFAY, and TFSK. An N6-(pyridoxal phosphate)lysine modification is found at Lys-217.

The protein belongs to the alliinase family. Requires pyridoxal 5'-phosphate as cofactor. In terms of tissue distribution, expressed at the leaf margin and in the vasculature of emerging young leaves. Expressed in the quiescent center and in the vasculature of root tips. Detected in the shoot apical meristem, stems, sepals, stamen filaments, the shoot and root junction, the stigma and the base of the silique.

Its subcellular location is the cytoplasm. The enzyme catalyses L-tryptophan + 2-oxoglutarate = indole-3-pyruvate + L-glutamate. It catalyses the reaction L-tryptophan + pyruvate = indole-3-pyruvate + L-alanine. It participates in plant hormone metabolism; auxin biosynthesis. With respect to regulation, inhibited by L-kynurenine. Its function is as follows. L-tryptophan aminotransferase involved in auxin (IAA) biosynthesis. Can convert L-tryptophan and pyruvate to indole-3-pyruvic acid (IPA) and alanine. Catalyzes the first step in IPA branch of the auxin biosynthetic pathway. Required for auxin production to initiate multiple change in growth in response to environmental and developmental cues. It is also active with phenylalanine, tyrosine, leucine, alanine, methionine and glutamine. Both TAA1 and TAR2 are required for maintaining proper auxin levels in roots, while TAA1, TAR1 and TAR2 are required for proper embryo patterning. Involved in the maintenance of the root stem cell niches and required for shade avoidance. The polypeptide is L-tryptophan--pyruvate aminotransferase 1 (TAA1) (Arabidopsis thaliana (Mouse-ear cress)).